A 422-amino-acid chain; its full sequence is Mitochondrial distribution and morphology protein 12 (422 aa).

The SMP-LTD domain maps to 1 to 386 (MSFDINWNQL…WPSWICIDMN (386 aa)). 2 disordered regions span residues 74-134 (GATN…HDLG) and 387-422 (DDGD…THEV). Acidic residues-rich tracts occupy residues 109 to 130 (FDDD…EYDD) and 387 to 401 (DDGD…EDSN). A compositionally biased stretch (basic and acidic residues) spans 405 to 422 (GDGKDNDGKHGDGPTHEV).

The protein belongs to the MDM12 family. Component of the ER-mitochondria encounter structure (ERMES) or MDM complex, composed of MMM1, MDM10, MDM12 and MDM34. An MMM1 homodimer associates with one molecule of MDM12 on each side in a pairwise head-to-tail manner, and the SMP-LTD domains of MMM1 and MDM12 generate a continuous hydrophobic tunnel for phospholipid trafficking.

It localises to the mitochondrion outer membrane. Its subcellular location is the endoplasmic reticulum membrane. Component of the ERMES/MDM complex, which serves as a molecular tether to connect the endoplasmic reticulum (ER) and mitochondria. Components of this complex are involved in the control of mitochondrial shape and protein biogenesis, and function in nonvesicular lipid trafficking between the ER and mitochondria. MDM12 is required for the interaction of the ER-resident membrane protein MMM1 and the outer mitochondrial membrane-resident beta-barrel protein MDM10. The MDM12-MMM1 subcomplex functions in the major beta-barrel assembly pathway that is responsible for biogenesis of all mitochondrial outer membrane beta-barrel proteins, and acts in a late step after the SAM complex. The MDM10-MDM12-MMM1 subcomplex further acts in the TOM40-specific pathway after the action of the MDM12-MMM1 complex. Essential for establishing and maintaining the structure of mitochondria and maintenance of mtDNA nucleoids. The polypeptide is Mitochondrial distribution and morphology protein 12 (Candida dubliniensis (strain CD36 / ATCC MYA-646 / CBS 7987 / NCPF 3949 / NRRL Y-17841) (Yeast)).